The chain runs to 72 residues: DNA-directed RNA polymerase subunit Rpo10 (72 aa).

Residues C7, C10, C53, and C54 each coordinate Zn(2+).

This sequence belongs to the archaeal Rpo10/eukaryotic RPB10 RNA polymerase subunit family. As to quaternary structure, part of the RNA polymerase complex. Zn(2+) is required as a cofactor.

It is found in the cytoplasm. The catalysed reaction is RNA(n) + a ribonucleoside 5'-triphosphate = RNA(n+1) + diphosphate. Its function is as follows. DNA-dependent RNA polymerase (RNAP) catalyzes the transcription of DNA into RNA using the four ribonucleoside triphosphates as substrates. The sequence is that of DNA-directed RNA polymerase subunit Rpo10 from Thermoplasma volcanium (strain ATCC 51530 / DSM 4299 / JCM 9571 / NBRC 15438 / GSS1).